A 408-amino-acid polypeptide reads, in one-letter code: Large ribosomal subunit protein uL4 (408 aa).

The segment at 58–98 (PYAVSKKAGHQTSAESWGTGRAVSRIPRVPGGGTHRAGQGA) is disordered.

It belongs to the universal ribosomal protein uL4 family.

The protein is Large ribosomal subunit protein uL4 (RPL4) of Prunus armeniaca (Apricot).